The following is a 378-amino-acid chain: Decaprenyl-diphosphate synthase subunit 1 (378 aa).

Isopentenyl diphosphate is bound by residues Lys-72, Arg-75, and His-130. Asp-137 and Asp-141 together coordinate Mg(2+). Arg-147 contacts isopentenyl diphosphate.

It belongs to the FPP/GGPP synthase family. In terms of assembly, heterotetramer of 2 dps1 and 2 dlp1 subunits. It depends on Mg(2+) as a cofactor.

It localises to the mitochondrion. The catalysed reaction is 7 isopentenyl diphosphate + (2E,6E)-farnesyl diphosphate = all-trans-decaprenyl diphosphate + 7 diphosphate. It participates in cofactor biosynthesis; ubiquinone biosynthesis. Supplies decaprenyl diphosphate, the precursor for the side chain of the isoprenoid quinones ubiquinone-10. The chain is Decaprenyl-diphosphate synthase subunit 1 (dps1) from Schizosaccharomyces pombe (strain 972 / ATCC 24843) (Fission yeast).